A 709-amino-acid polypeptide reads, in one-letter code: Polyribonucleotide nucleotidyltransferase (709 aa).

2 residues coordinate Mg(2+): D489 and D495. In terms of domain architecture, KH spans P556–I615. The 69-residue stretch at G625–K693 folds into the S1 motif domain.

This sequence belongs to the polyribonucleotide nucleotidyltransferase family. Mg(2+) is required as a cofactor.

The protein localises to the cytoplasm. It catalyses the reaction RNA(n+1) + phosphate = RNA(n) + a ribonucleoside 5'-diphosphate. In terms of biological role, involved in mRNA degradation. Catalyzes the phosphorolysis of single-stranded polyribonucleotides processively in the 3'- to 5'-direction. This Streptococcus agalactiae serotype III (strain NEM316) protein is Polyribonucleotide nucleotidyltransferase.